A 279-amino-acid polypeptide reads, in one-letter code: MTNIITVNNLFFKYDSNQTHYQLENVSFHVKQGEWLSIIGHNGSGKSTTVRLIDGLLEAESGQIIIDGQELTEDNVWELRHKIGMVFQNPDNQFVGATVEDDVAFGLENKGIPLKDMKERVDQALDLVGMSEFKMREPARLSGGQKQRVAIAGAVAMRPQVIILDEATSMLDPEGRLELIRTIRAIRQKYNLTVISITHDLDEVALSDRVIVMKNGKVESTSTPKALFGRGNRLISLGLDVPFTSRLMAELAANGLDIGTEYLTEKELEEQLWELNLKM.

The region spanning isoleucine 5–aspartate 240 is the ABC transporter domain. ATP is bound at residue glycine 40–serine 47.

It belongs to the ABC transporter superfamily. Energy-coupling factor EcfA family. Forms a stable energy-coupling factor (ECF) transporter complex composed of 2 membrane-embedded substrate-binding proteins (S component), 2 ATP-binding proteins (A component) and 2 transmembrane proteins (T component).

The protein localises to the cell membrane. ATP-binding (A) component of a common energy-coupling factor (ECF) ABC-transporter complex. Unlike classic ABC transporters this ECF transporter provides the energy necessary to transport a number of different substrates. The protein is Energy-coupling factor transporter ATP-binding protein EcfA1 of Streptococcus agalactiae serotype Ia (strain ATCC 27591 / A909 / CDC SS700).